A 274-amino-acid polypeptide reads, in one-letter code: Actin-binding protein Smlt3054 (274 aa).

2 ANK repeats span residues 192–221 and 225–254; these read SGNT…DVAA and HGWA…NPEQ. Positions 251 to 274 are disordered; it reads NPEQPGWRGRTPTRMHRHEQTQAL.

In terms of assembly, exists as a dimer as well as a higher order oligomer.

The protein localises to the secreted. The protein resides in the periplasm. Directly binds F-actin, which results in thickened and distorted F-actin fibers, and affects cellular F-actin localization. Thus, may be a host effector whose function is to disrupt host actin cytoskeletal structure, which may enhance invasion. The polypeptide is Actin-binding protein Smlt3054 (Stenotrophomonas maltophilia (strain K279a)).